A 243-amino-acid chain; its full sequence is uncharacterized protein (243 aa).

An N-terminal signal peptide occupies residues Met-1–Ser-16. Asn-55 is a glycosylation site (N-linked (GlcNAc...) asparagine). Disordered stretches follow at residues Ser-95–Ser-126 and Asn-208–Val-235. 2 stretches are compositionally biased toward low complexity: residues Asn-99 to Gly-112 and Gln-209 to Leu-229. Cys-141 and Cys-239 are disulfide-bonded.

It belongs to the protease inhibitor I33 family.

The protein localises to the secreted. This is an uncharacterized protein from Caenorhabditis elegans.